The chain runs to 266 residues: MATVPEPINEVMAYYSDENELLFEVDGPKQMKSCTQHLDLGSMGDGNIQLQISHQLYNKSFRQVVSVIVAMEKLRSRAYEHVFRDDDLRSILSFIFEEEPVIFETSSDELLCDAAVQSVKCKLQDREQKSLVLDSPCVLKALHLPSQEMSREVVFCMSFVQGEERDNKIPVALGIRDKNLYLSCVKKGDTPTLQLEEVDPKVYPKRNMEKRFVFYKTEIKNTVEFESVLYPNWYISTSQIEEKPVFLGRFRGGQDITDFRMETLSP.

A propeptide spanning residues 1 to 113 is cleaved from the precursor; sequence MATVPEPINE…ETSSDELLCD (113 aa).

The protein belongs to the IL-1 family. As to quaternary structure, monomer. In its precursor form, weakly interacts with full-length MEFV; the mature cytokine does not interact at all. Interacts with integrins ITGAV:ITGBV and ITGA5:ITGB1; integrin-binding is required for IL1B signaling. Interacts with cargo receptor TMED10; the interaction is direct and is required for the secretion of IL1B mature form. Interacts with HSP90AB1; the interaction facilitates cargo translocation into the ERGIC. Interacts with HSP90B1; the interaction facilitates cargo translocation into the ERGIC.

The protein resides in the cytoplasm. The protein localises to the cytosol. Its subcellular location is the secreted. It is found in the lysosome. It localises to the extracellular exosome. Potent pro-inflammatory cytokine. Initially discovered as the major endogenous pyrogen, induces prostaglandin synthesis, neutrophil influx and activation, T-cell activation and cytokine production, B-cell activation and antibody production, and fibroblast proliferation and collagen production. Promotes Th17 differentiation of T-cells. Synergizes with IL12/interleukin-12 to induce IFNG synthesis from T-helper 1 (Th1) cells. Plays a role in angiogenesis by inducing VEGF production synergistically with TNF and IL6. Involved in transduction of inflammation downstream of pyroptosis: its mature form is specifically released in the extracellular milieu by passing through the gasdermin-D (GSDMD) pore. The protein is Interleukin-1 beta (IL1B) of Ovis aries (Sheep).